Consider the following 228-residue polypeptide: Cytochrome c oxidase subunit 2 (228 aa).

Topologically, residues 1-26 are mitochondrial intermembrane; sequence MSTWANLGLQDSASPLMEQLIFFHDH. The chain crosses the membrane as a helical span at residues 27 to 48; sequence ALLILVMITVLVGYLMFMLFFN. The Mitochondrial matrix portion of the chain corresponds to 49-62; the sequence is NYVNRFLLHGQLIE. Residues 63 to 82 form a helical membrane-spanning segment; that stretch reads MIWTILPAIILLFIALPSLR. At 83–228 the chain is on the mitochondrial intermembrane side; it reads LLYLLDEINE…FIKWISSNNS (146 aa). Residues histidine 161, cysteine 196, glutamate 198, cysteine 200, histidine 204, and methionine 207 each coordinate Cu cation. Glutamate 198 contacts Mg(2+).

This sequence belongs to the cytochrome c oxidase subunit 2 family. In terms of assembly, component of the cytochrome c oxidase (complex IV, CIV), a multisubunit enzyme composed of a catalytic core of 3 subunits and several supernumerary subunits. The complex exists as a monomer or a dimer and forms supercomplexes (SCs) in the inner mitochondrial membrane with ubiquinol-cytochrome c oxidoreductase (cytochrome b-c1 complex, complex III, CIII). The cofactor is Cu cation.

It is found in the mitochondrion inner membrane. It catalyses the reaction 4 Fe(II)-[cytochrome c] + O2 + 8 H(+)(in) = 4 Fe(III)-[cytochrome c] + 2 H2O + 4 H(+)(out). Functionally, component of the cytochrome c oxidase, the last enzyme in the mitochondrial electron transport chain which drives oxidative phosphorylation. The respiratory chain contains 3 multisubunit complexes succinate dehydrogenase (complex II, CII), ubiquinol-cytochrome c oxidoreductase (cytochrome b-c1 complex, complex III, CIII) and cytochrome c oxidase (complex IV, CIV), that cooperate to transfer electrons derived from NADH and succinate to molecular oxygen, creating an electrochemical gradient over the inner membrane that drives transmembrane transport and the ATP synthase. Cytochrome c oxidase is the component of the respiratory chain that catalyzes the reduction of oxygen to water. Electrons originating from reduced cytochrome c in the intermembrane space (IMS) are transferred via the dinuclear copper A center (CU(A)) of subunit 2 and heme A of subunit 1 to the active site in subunit 1, a binuclear center (BNC) formed by heme A3 and copper B (CU(B)). The BNC reduces molecular oxygen to 2 water molecules using 4 electrons from cytochrome c in the IMS and 4 protons from the mitochondrial matrix. In Drosophila melanogaster (Fruit fly), this protein is Cytochrome c oxidase subunit 2 (mt:CoII).